The sequence spans 536 residues: Multifunctional cytochrome P450 monooxygenase af510 (536 aa).

A helical transmembrane segment spans residues 4-24 (ELSTLQLSCVAFVAFMAVLVF). N-linked (GlcNAc...) asparagine glycosylation is found at Asn210 and Asn293. Cys448 provides a ligand contact to heme.

It belongs to the cytochrome P450 family. It depends on heme as a cofactor.

It is found in the membrane. It catalyses the reaction (+)-exo-beta-bergamotene + 2 reduced [NADPH--hemoprotein reductase] + 3 O2 = 5-dehydro-6-demethoxyfumagillol + 2 oxidized [NADPH--hemoprotein reductase] + 3 H2O + 2 H(+). It functions in the pathway secondary metabolite biosynthesis; terpenoid biosynthesis. Multifunctional cytochrome P450 monooxygenase; part of the gene cluster that mediates the biosynthesis of fumagillin, a meroterpenoid that has numerous biological activities including irreversible inhibition of human type 2 methionine aminopeptidase (METAP2). Within the pathway, the multifunctional cytochrome P450 monooxygenase af510 acts as a 2,4,6-trichlorophenol monooxygenase that first performs the C-H hydroxylation at the bridgehead C5 position to yield 5R-hydroxyl-beta-trans-bergamotene. Subsequently, a four electron oxidation initiated at C-9 coupled to cleavage of the cyclobutane C5-C8 bond of the bicyclo[3.1.1] core yields the epoxyketone intermediate 5-keto-cordycol. An additional epoxidation reaction also catalyzed by af510 then furnishes the characteristic bisepoxide ketone 5-keto-demethoxyfumagillol. The pathway begins with the conversion of farnesyl pyrophosphate (FPP) to beta-trans-bergamotene by the membrane-bound beta-trans-bergamotene synthase af520. The multifunctional cytochrome P450 monooxygenase af510 then converts beta-trans-bergamotene into 5-keto-demethoxyfumagillol via several oxydation steps. 5-keto-demethoxyfumagillol is then subjected to successive C-6 hydroxylation and O-methylation by the dioxygenase af480 and O-methyltransferase af390-400, respectively, to yield 5-keto-fumagillol, which is then stereoselectively reduced by the keto-reductase af490 to 5R-hydroxy-seco-sesquiterpene. The next step is the polyketide transferase af380-catalyzed transfer of a dodecapentaenoyl group synthesized by the polyketide synthase af370 onto 5R-hydroxy-seco-sesquiterpene which leads to the production of prefumagillin. Finally, oxidative cleavage by the monooxygenase af470 converts prefumagillin to fumagillin. This chain is Multifunctional cytochrome P450 monooxygenase af510, found in Aspergillus fumigatus (strain ATCC MYA-4609 / CBS 101355 / FGSC A1100 / Af293) (Neosartorya fumigata).